The following is a 105-amino-acid chain: MYAVFQTGSKQYRVVEGQVIHIERIDLEVGNQVEFNQILLIDSNECLHIGSPFIKKGRIIAEIIAQSLNQKIKIIKFRRRKHFRKFQGHRQCFTTIKIVSIKHKH.

This sequence belongs to the bacterial ribosomal protein bL21 family. Part of the 50S ribosomal subunit. Contacts protein L20.

In terms of biological role, this protein binds to 23S rRNA in the presence of protein L20. The polypeptide is Large ribosomal subunit protein bL21 (Blochmanniella pennsylvanica (strain BPEN)).